Consider the following 412-residue polypeptide: DNA replication and repair protein RecF (412 aa).

30-37 (GANGAGKT) contacts ATP. The interval 369–412 (LQVRPGGGTAAVTPDPEYARGEATAANGAASAPTGADAASTSRD) is disordered. The segment covering 389–412 (GEATAANGAASAPTGADAASTSRD) has biased composition (low complexity).

It belongs to the RecF family.

It localises to the cytoplasm. Its function is as follows. The RecF protein is involved in DNA metabolism; it is required for DNA replication and normal SOS inducibility. RecF binds preferentially to single-stranded, linear DNA. It also seems to bind ATP. This is DNA replication and repair protein RecF from Salinibacter ruber (strain DSM 13855 / M31).